A 271-amino-acid polypeptide reads, in one-letter code: Shikimate dehydrogenase (NADP(+)) (271 aa).

Shikimate-binding positions include 15–17 and Thr62; that span reads SKS. The active-site Proton acceptor is Lys66. Glu78 is a binding site for NADP(+). Shikimate is bound by residues Asn87 and Asp103. Residues 127–131, 151–156, and Met214 contribute to the NADP(+) site; these read GAGGA and NRTQAK. Position 216 (Tyr216) interacts with shikimate. Residue Gly238 participates in NADP(+) binding.

This sequence belongs to the shikimate dehydrogenase family. As to quaternary structure, homodimer.

It catalyses the reaction shikimate + NADP(+) = 3-dehydroshikimate + NADPH + H(+). It participates in metabolic intermediate biosynthesis; chorismate biosynthesis; chorismate from D-erythrose 4-phosphate and phosphoenolpyruvate: step 4/7. Its function is as follows. Involved in the biosynthesis of the chorismate, which leads to the biosynthesis of aromatic amino acids. Catalyzes the reversible NADPH linked reduction of 3-dehydroshikimate (DHSA) to yield shikimate (SA). This is Shikimate dehydrogenase (NADP(+)) from Shewanella pealeana (strain ATCC 700345 / ANG-SQ1).